We begin with the raw amino-acid sequence, 62 residues long: Synergistic-type venom protein C8S2, chain 1 (62 aa).

3 cysteine pairs are disulfide-bonded: cysteine 3–cysteine 24, cysteine 17–cysteine 42, and cysteine 46–cysteine 57.

This sequence belongs to the three-finger toxin family. Short-chain subfamily. Aminergic toxin sub-subfamily. As to quaternary structure, heterodimer of C8S2 chain 1 and chain 2 (AC P01411); disulfide-linked. Expressed by the venom gland.

It is found in the secreted. This protein shows a synergetic toxic effect in that it enhances the toxicity of other toxins. The chain is Synergistic-type venom protein C8S2, chain 1 from Dendroaspis angusticeps (Eastern green mamba).